The following is a 161-amino-acid chain: Large ribosomal subunit protein uL10 (161 aa).

The protein belongs to the universal ribosomal protein uL10 family. Part of the ribosomal stalk of the 50S ribosomal subunit. The N-terminus interacts with L11 and the large rRNA to form the base of the stalk. The C-terminus forms an elongated spine to which L12 dimers bind in a sequential fashion forming a multimeric L10(L12)X complex.

Functionally, forms part of the ribosomal stalk, playing a central role in the interaction of the ribosome with GTP-bound translation factors. This Buchnera aphidicola subsp. Cinara cedri (strain Cc) protein is Large ribosomal subunit protein uL10.